We begin with the raw amino-acid sequence, 319 residues long: uncharacterized protein (319 aa).

Positions 268–312 are enriched in low complexity; sequence SSVVAVTHPPSTTSTTTSVSETLSSFIAPSDLSSQPSPSSHPSSP. The interval 268–319 is disordered; that stretch reads SSVVAVTHPPSTTSTTTSVSETLSSFIAPSDLSSQPSPSSHPSSPFGNHNEF.

This is an uncharacterized protein from Lepidoptera (butterflies and moths).